Consider the following 488-residue polypeptide: Transmembrane protein 39A (488 aa).

Asparagine 31 and asparagine 39 each carry an N-linked (GlcNAc...) asparagine glycan. 8 helical membrane-spanning segments follow: residues 72 to 92 (SLLFEFLFFIYLLVALFIQYI), 110 to 130 (TSLNFHLIDYHLAAFITVMLA), 154 to 174 (VLISARLVLLTLCGWVLCWTL), 182 to 202 (SVLNLLFLGYPFGVYVPLCCF), 287 to 307 (EVLFNSLFSAYYVAFLPLCFV), 319 to 339 (CEHLIMVWINAFVMLTTQLLP), 420 to 440 (LLNLLILIEGSVVFYQLYSLL), and 446 to 466 (NHTLSMALILFCNYYVLFKLL).

The protein belongs to the TMEM39 family. In terms of assembly, interacts with SACM1L, SEC23A and SEC24A.

It localises to the endoplasmic reticulum membrane. In terms of biological role, regulates autophagy by controlling the spatial distribution and levels of the intracellular phosphatidylinositol 4-phosphate (PtdIns(4)P) pools. Modulates (PtdIns(4)P) levels by regulating the ER-to-Golgi trafficking of the phosphatidylinositide phosphatase SACM1L. The protein is Transmembrane protein 39A (TMEM39A) of Bos taurus (Bovine).